A 394-amino-acid polypeptide reads, in one-letter code: MARIETRTEPMVLNMGPHHPSMHGVLRLIVTLDGEDVVDCEPVIGYLHRGMEKIAENRTTVMYVPYVSRWDYAAGMFNEAVTVNAPEKLAGVAVPKRASYIRVIMLELNRIANHLLWFGPFLADVGAQTPFFYQFREREMIYDLWEAATGYRMVNNNYFRVGGVAADLPYGWVDKCLEFCDYFLPVIDEYEKLVTNNPIFRRRIEGIGTISREEAINWGLSGPMLRASGVKWDLRKVDHYECYDDFDWDVQWETAGDCLARYTVRMREMRESVKIIKQAIKGLPGGPYENLEAKRLAAGKKSEWDAFDYQYIGKKVSPTFKMPKGEIYARVESGKGELGIYLIGDDNVFPWRWKIRPADFNNLQILPHLLRGMKVADVVVILGSIDVIMGSVDR.

This sequence belongs to the complex I 49 kDa subunit family. NDH-1 can be composed of about 15 different subunits; different subcomplexes with different compositions have been identified which probably have different functions.

The protein resides in the cellular thylakoid membrane. It carries out the reaction a plastoquinone + NADH + (n+1) H(+)(in) = a plastoquinol + NAD(+) + n H(+)(out). The enzyme catalyses a plastoquinone + NADPH + (n+1) H(+)(in) = a plastoquinol + NADP(+) + n H(+)(out). Its function is as follows. NDH-1 shuttles electrons from an unknown electron donor, via FMN and iron-sulfur (Fe-S) centers, to quinones in the respiratory and/or the photosynthetic chain. The immediate electron acceptor for the enzyme in this species is believed to be plastoquinone. Couples the redox reaction to proton translocation, and thus conserves the redox energy in a proton gradient. Cyanobacterial NDH-1 also plays a role in inorganic carbon-concentration. The polypeptide is NAD(P)H-quinone oxidoreductase subunit H (Nostoc sp. (strain PCC 7120 / SAG 25.82 / UTEX 2576)).